An 843-amino-acid chain; its full sequence is OTU domain-containing protein 7B (843 aa).

Residues 50 to 88 (GNLPPSFSEGSGGSRTPEKGFSDREPTRPPRPILQRQDD) are disordered. Basic and acidic residues predominate over residues 65 to 77 (TPEKGFSDREPTR). S100 carries the post-translational modification Phosphoserine. Residues 152–401 (ERDLIEQSML…AVDPGKGWEW (250 aa)) form a TRAF-binding region. The catalytic stretch occupies residues 167 to 440 (AGRLNWWVSV…VKWIPLSSDA (274 aa)). The 183-residue stretch at 183 to 365 (LLPLATTGDG…QAHFSALVSM (183 aa)) folds into the OTU domain. The tract at residues 187-193 (ATTGDGN) is regulatory loop. Residue D191 is part of the active site. The Nucleophile role is filled by C194. H358 acts as the Proton acceptor in catalysis. 2 disordered regions span residues 442-587 (APLA…GGSK) and 652-711 (IMNG…CQEP). Basic and acidic residues-rich tracts occupy residues 456-471 (DEPR…DKES) and 488-500 (SKRD…KRAD). Residues S464, S467, and S471 each carry the phosphoserine modification. The short motif at 483 to 498 (RRKEKSKRDREKDKKR) is the Nuclear localization signal element. Over residues 531–543 (KPGGVGTGLGGSS) the composition is skewed to gly residues. The segment covering 665-675 (KKPEPDAREEQ) has biased composition (basic and acidic residues). Phosphothreonine is present on T729. The tract at residues 732 to 792 (RQCPPGRPYP…PEPDGWAGGL (61 aa)) is disordered. Residues 796–831 (PPTQTKCKQPNCSFYGHPETNNFCSCCYREELRRRE) form an A20-type zinc finger. Positions 802, 807, 819, and 822 each coordinate Zn(2+).

Belongs to the peptidase C64 family. Interacts with ZAP70 in activated T cells, but not in resting T cells. Interacts with TRAF3. Interacts with TRAF6. Interacts with PARK7, leading to inhibit deubiquitinase activity. Interacts with EGFR, ITCH and NEDD4. Post-translationally, phosphorylated by EGFR. In terms of tissue distribution, widely expressed. Abundant in kidney, heart and fetal liver. Expressed differentially among B-cells at distinct developmental stages. Higher expression seen in primary immature B-cells as compared to the mature cells.

It is found in the cytoplasm. It localises to the nucleus. The catalysed reaction is Thiol-dependent hydrolysis of ester, thioester, amide, peptide and isopeptide bonds formed by the C-terminal Gly of ubiquitin (a 76-residue protein attached to proteins as an intracellular targeting signal).. Its activity is regulated as follows. Deubiquitinase activity is inhibited following interaction with PARK7. Its function is as follows. Negative regulator of the non-canonical NF-kappa-B pathway that acts by mediating deubiquitination of TRAF3, an inhibitor of the NF-kappa-B pathway, thereby acting as a negative regulator of B-cell responses. In response to non-canonical NF-kappa-B stimuli, deubiquitinates 'Lys-48'-linked polyubiquitin chains of TRAF3, preventing TRAF3 proteolysis and over-activation of non-canonical NF-kappa-B. Negatively regulates mucosal immunity against infections. Deubiquitinates ZAP70, and thereby regulates T cell receptor (TCR) signaling that leads to the activation of NF-kappa-B. Plays a role in T cell homeostasis and is required for normal T cell responses, including production of IFNG and IL2. Mediates deubiquitination of EGFR. Has deubiquitinating activity toward 'Lys-11', 'Lys-48' and 'Lys-63'-linked polyubiquitin chains. Has a much higher catalytic rate with 'Lys-11'-linked polyubiquitin chains (in vitro); however the physiological significance of these data are unsure. Hydrolyzes both linear and branched forms of polyubiquitin. Acts as a regulator of mTORC1 and mTORC2 assembly by mediating 'Lys-63'-linked deubiquitination of MLST8, thereby promoting assembly of the mTORC2 complex, while inibiting formation of the mTORC1 complex. This chain is OTU domain-containing protein 7B (OTUD7B), found in Homo sapiens (Human).